The sequence spans 417 residues: DnaJ protein homolog ANJ1 (417 aa).

The 66-residue stretch at 11–76 (STRYYEILGV…REIYDQYGED (66 aa)) folds into the J domain. The CR-type zinc finger occupies 135-219 (GTTKKLSLSR…CKGEKVVQEK (85 aa)). CXXCXGXG motif repeat units follow at residues 148–155 (CSKCTGKG), 164–171 (CSGCQGTG), and 191–198 (CNECKGTG). A CXXCXGXG motif; approximate repeat occupies 207-214 (CPQCKGEK). The interval 384–417 (IEEEMKRKQTQAQQEAYDEDDEPAGGQRVQCAQQ) is disordered. Position 414 is a cysteine methyl ester (Cys414). The S-farnesyl cysteine moiety is linked to residue Cys414. Residues 415 to 417 (AQQ) constitute a propeptide, removed in mature form.

Its subcellular location is the membrane. Functionally, plays a continuous role in plant development probably in the structural organization of compartments. This chain is DnaJ protein homolog ANJ1, found in Atriplex nummularia (Old man saltbush).